The chain runs to 179 residues: Large ribosomal subunit protein uL5 (179 aa).

It belongs to the universal ribosomal protein uL5 family. Part of the 50S ribosomal subunit; part of the 5S rRNA/L5/L18/L25 subcomplex. Contacts the 5S rRNA and the P site tRNA. Forms a bridge to the 30S subunit in the 70S ribosome.

In terms of biological role, this is one of the proteins that bind and probably mediate the attachment of the 5S RNA into the large ribosomal subunit, where it forms part of the central protuberance. In the 70S ribosome it contacts protein S13 of the 30S subunit (bridge B1b), connecting the 2 subunits; this bridge is implicated in subunit movement. Contacts the P site tRNA; the 5S rRNA and some of its associated proteins might help stabilize positioning of ribosome-bound tRNAs. The protein is Large ribosomal subunit protein uL5 of Nitrosomonas eutropha (strain DSM 101675 / C91 / Nm57).